The primary structure comprises 119 residues: Beta-2-microglobulin (119 aa).

An N-terminal signal peptide occupies residues 1–20; sequence MARFVVVPLLVLLSLFGLEA. Residues 25 to 114 enclose the Ig-like C1-type domain; it reads PKIQVYSRYP…VTFSTPKTVK (90 aa). Cysteine 45 and cysteine 100 form a disulfide bridge.

The protein belongs to the beta-2-microglobulin family. Heterodimer of an alpha chain and a beta chain. Beta-2-microglobulin is the beta-chain of major histocompatibility complex class I molecules.

It localises to the secreted. Component of the class I major histocompatibility complex (MHC). Involved in the presentation of peptide antigens to the immune system. The polypeptide is Beta-2-microglobulin (B2M) (Saguinus bicolor bicolor (Pied bare-faced tamarin)).